A 261-amino-acid polypeptide reads, in one-letter code: Mediator of RNA polymerase II transcription subunit 7 (261 aa).

Disordered stretches follow at residues 1–55 (MAEA…TPAE) and 224–250 (DSAS…ANSS). Composition is skewed to basic and acidic residues over residues 23 to 45 (FTPD…EDGK) and 230 to 240 (GENDTAKRTTG). Residues 241-250 (DQDANNANSS) show a composition bias toward polar residues.

This sequence belongs to the Mediator complex subunit 7 family. In terms of assembly, component of the Mediator complex.

The protein localises to the nucleus. Component of the Mediator complex, a coactivator involved in the regulated transcription of nearly all RNA polymerase II-dependent genes. Mediator functions as a bridge to convey information from gene-specific regulatory proteins to the basal RNA polymerase II transcription machinery. Mediator is recruited to promoters by direct interactions with regulatory proteins and serves as a scaffold for the assembly of a functional preinitiation complex with RNA polymerase II and the general transcription factors. In Neosartorya fischeri (strain ATCC 1020 / DSM 3700 / CBS 544.65 / FGSC A1164 / JCM 1740 / NRRL 181 / WB 181) (Aspergillus fischerianus), this protein is Mediator of RNA polymerase II transcription subunit 7 (med7).